A 279-amino-acid chain; its full sequence is Bifunctional protein FolD (279 aa).

Residues 159-161, Ser-184, and Thr-225 contribute to the NADP(+) site; that span reads GRS.

Belongs to the tetrahydrofolate dehydrogenase/cyclohydrolase family. In terms of assembly, homodimer.

The enzyme catalyses (6R)-5,10-methylene-5,6,7,8-tetrahydrofolate + NADP(+) = (6R)-5,10-methenyltetrahydrofolate + NADPH. It carries out the reaction (6R)-5,10-methenyltetrahydrofolate + H2O = (6R)-10-formyltetrahydrofolate + H(+). The protein operates within one-carbon metabolism; tetrahydrofolate interconversion. In terms of biological role, catalyzes the oxidation of 5,10-methylenetetrahydrofolate to 5,10-methenyltetrahydrofolate and then the hydrolysis of 5,10-methenyltetrahydrofolate to 10-formyltetrahydrofolate. The sequence is that of Bifunctional protein FolD from Methanospirillum hungatei JF-1 (strain ATCC 27890 / DSM 864 / NBRC 100397 / JF-1).